The primary structure comprises 497 residues: POU domain, class 3, transcription factor 3 (497 aa).

A compositionally biased stretch (gly residues) spans 31 to 51; it reads GGGGGGGGGGGGAGGGGGGMQ. Disordered regions lie at residues 31 to 62, 121 to 189, 230 to 316, and 458 to 497; these read GGGGGGGGGGGGAGGGGGGMQPGSAAVTSGAY, WSGS…WGAA, NGML…TPTS, and EKRMTPPGIQQQTPDDVYSQVGTVSADTPPPHHGLQTSVQ. 2 stretches are compositionally biased toward pro residues: residues 133 to 145 and 170 to 180; these read QQPPRPPPPPPQG and HLGPPPPPPHQ. Gly residues predominate over residues 240–250; it reads GGGGGGAGGGA. Residues 269–286 are compositionally biased toward basic residues; that stretch reads HHHHHHHHAHPHPPHPHH. Residues 311–385 form the POU-specific domain; that stretch reads EDTPTSDDLE…LLNKWLEEAD (75 aa). Positions 403 to 462 form a DNA-binding region, homeobox; the sequence is KRKKRTSIEVSVKGALESHFLKCPKPSAQEITNLADSLQLEKEVVRVWFCNRRQKEKRMT. Residues 465 to 483 show a composition bias toward polar residues; sequence GIQQQTPDDVYSQVGTVSA.

Belongs to the POU transcription factor family. Class-3 subfamily. Homodimer. In terms of tissue distribution, brain.

It localises to the nucleus. In terms of biological role, transcription factor that acts synergistically with SOX11 and SOX4. Plays a role in neuronal development. Is implicated in an enhancer activity at the embryonic met-mesencephalic junction; the enhancer element contains the octamer motif (5'-ATTTGCAT-3'). The polypeptide is POU domain, class 3, transcription factor 3 (Pou3f3) (Rattus norvegicus (Rat)).